A 634-amino-acid polypeptide reads, in one-letter code: RING finger protein 207 (634 aa).

The RING-type zinc-finger motif lies at 25 to 64; sequence CPLCHVQYERPCLLDCFHDFCAGCLRGRATDGRLTCPLCQ. The segment at 93–145 adopts a B box-type; atypical zinc-finger fold; it reads VEAVRCANCDLECSEQDVETTYFCNTCGQPLCARCRDETHRARMFARHDIVAL. Zn(2+) is bound by residues Cys-98, Cys-101, Cys-127, and His-132. Coiled coils occupy residues 422–457 and 494–518; these read EHCRHYEDSYRHLQAEMQSLKDQVQELHRDLTKHHS and EIWEEAYQRVANEQEIYEAQLHDLL. Residues 552–634 are disordered; that stretch reads FQAPVDEQSE…DVPTWREHPT (83 aa).

As to quaternary structure, interacts with the core-glycosylated, but not the fully glycosylated form of KCNH2/HERG. Interacts with DNAJA1 and HSPA8. Interacts (via the C-terminus) with HSPA1A; this interaction additively increases KCNH2 expression.

The protein localises to the cytoplasm. In terms of biological role, plays a role in cardiac repolarization possibly by stabilizing membrane expression of the potassium channel KCNH2/HERG, or by assisting its synthesis, folding or export from the endoplasmic reticulum, in a heat shock protein-dependent manner. The protein is RING finger protein 207 (RNF207) of Homo sapiens (Human).